Here is a 318-residue protein sequence, read N- to C-terminus: V-set and immunoglobulin domain-containing protein 1 (318 aa).

The N-terminal stretch at 1-19 is a signal peptide; it reads MSFLLFITLGLSLTALSHC. One can recognise an Ig-like V-type domain in the interval 20–131; sequence VQVTIQNPII…SSGQGKILLT (112 aa). The Extracellular portion of the chain corresponds to 20 to 233; it reads VQVTIQNPII…TGGEGGVIAA (214 aa). 2 disulfides stabilise this stretch: Cys41–Cys114 and Cys157–Cys207. Residues 136–223 form the Ig-like C2-type domain; that stretch reads PSVPHCSIRG…GNATCELNLH (88 aa). The helical transmembrane segment at 234-254 threads the bilayer; sequence AVIGGLLAAAIIIAIVWFLVV. The Cytoplasmic segment spans residues 255–318; the sequence is KRKQKKQLPP…ANGETEEPTA (64 aa). A disordered region spans residues 261–318; sequence QLPPTKEMKTGGNQYMAVSGEANEPPKENLGASEPTETIQFHDHAENAANGETEEPTA.

As to expression, expressed in thymocytes.

Its subcellular location is the membrane. The chain is V-set and immunoglobulin domain-containing protein 1 (vsig1) from Xenopus laevis (African clawed frog).